The sequence spans 274 residues: Diaminopimelate epimerase (274 aa).

Substrate is bound by residues Asn11, Gln44, and Asn64. The Proton donor role is filled by Cys73. Residues 74-75 (GN), Asn157, Asn190, and 208-209 (ER) each bind substrate. Residue Cys217 is the Proton acceptor of the active site. Substrate is bound at residue 218–219 (GS).

It belongs to the diaminopimelate epimerase family. Homodimer.

It localises to the cytoplasm. It catalyses the reaction (2S,6S)-2,6-diaminopimelate = meso-2,6-diaminopimelate. It participates in amino-acid biosynthesis; L-lysine biosynthesis via DAP pathway; DL-2,6-diaminopimelate from LL-2,6-diaminopimelate: step 1/1. In terms of biological role, catalyzes the stereoinversion of LL-2,6-diaminopimelate (L,L-DAP) to meso-diaminopimelate (meso-DAP), a precursor of L-lysine and an essential component of the bacterial peptidoglycan. This is Diaminopimelate epimerase from Haemophilus influenzae (strain PittEE).